The primary structure comprises 813 residues: Probable receptor-like protein kinase At5g39020 (813 aa).

Residues Met1 to Ala21 form the signal peptide. The Extracellular segment spans residues Ala22–Val437. N-linked (GlcNAc...) asparagine glycosylation is found at Asn46, Asn61, Asn165, Asn202, Asn213, Asn263, Asn286, Asn293, Asn384, and Asn401. The chain crosses the membrane as a helical span at residues Leu438 to Ile458. Topologically, residues Met459 to Ile813 are cytoplasmic. Residues Lys496–Leu771 form the Protein kinase domain. Residues Val502–Val510 and Lys524 each bind ATP. Residue Asp619 is the Proton acceptor of the active site. Positions Glu791–Ile813 are disordered. A compositionally biased stretch (polar residues) spans Gln804–Ile813.

This sequence belongs to the protein kinase superfamily. Ser/Thr protein kinase family.

The protein localises to the membrane. The protein is Probable receptor-like protein kinase At5g39020 of Arabidopsis thaliana (Mouse-ear cress).